The primary structure comprises 327 residues: Biotin synthase (327 aa).

In terms of domain architecture, Radical SAM core spans 49-282 (FNKEKIDLCS…NKVIRLCGGR (234 aa)). Residues Cys67, Cys71, and Cys74 each coordinate [4Fe-4S] cluster. Residues Ser110, Cys142, Cys201, and Arg277 each contribute to the [2Fe-2S] cluster site.

Belongs to the radical SAM superfamily. Biotin synthase family. In terms of assembly, homodimer. [4Fe-4S] cluster serves as cofactor. [2Fe-2S] cluster is required as a cofactor.

It carries out the reaction (4R,5S)-dethiobiotin + (sulfur carrier)-SH + 2 reduced [2Fe-2S]-[ferredoxin] + 2 S-adenosyl-L-methionine = (sulfur carrier)-H + biotin + 2 5'-deoxyadenosine + 2 L-methionine + 2 oxidized [2Fe-2S]-[ferredoxin]. It functions in the pathway cofactor biosynthesis; biotin biosynthesis; biotin from 7,8-diaminononanoate: step 2/2. Its function is as follows. Catalyzes the conversion of dethiobiotin (DTB) to biotin by the insertion of a sulfur atom into dethiobiotin via a radical-based mechanism. This chain is Biotin synthase, found in Methanococcus maripaludis (strain DSM 14266 / JCM 13030 / NBRC 101832 / S2 / LL).